A 392-amino-acid chain; its full sequence is Formate-dependent phosphoribosylglycinamide formyltransferase (392 aa).

Residues 22–23 and E82 contribute to the N(1)-(5-phospho-beta-D-ribosyl)glycinamide site; that span reads EL. Residues R114, K155, 160–165, 195–198, and E203 contribute to the ATP site; these read SSGKGQ and EKII. An ATP-grasp domain is found at 119-308; it reads VLVSKKLNIL…EFALHVRSFL (190 aa). E267 and E279 together coordinate Mg(2+). N(1)-(5-phospho-beta-D-ribosyl)glycinamide is bound by residues D286, K355, and 362–363; that span reads RR.

Belongs to the PurK/PurT family. In terms of assembly, homodimer.

It catalyses the reaction N(1)-(5-phospho-beta-D-ribosyl)glycinamide + formate + ATP = N(2)-formyl-N(1)-(5-phospho-beta-D-ribosyl)glycinamide + ADP + phosphate + H(+). It participates in purine metabolism; IMP biosynthesis via de novo pathway; N(2)-formyl-N(1)-(5-phospho-D-ribosyl)glycinamide from N(1)-(5-phospho-D-ribosyl)glycinamide (formate route): step 1/1. Involved in the de novo purine biosynthesis. Catalyzes the transfer of formate to 5-phospho-ribosyl-glycinamide (GAR), producing 5-phospho-ribosyl-N-formylglycinamide (FGAR). Formate is provided by PurU via hydrolysis of 10-formyl-tetrahydrofolate. The sequence is that of Formate-dependent phosphoribosylglycinamide formyltransferase from Wigglesworthia glossinidia brevipalpis.